The following is a 342-amino-acid chain: L-lysine 2,3-aminomutase (342 aa).

The Radical SAM core domain occupies 106-329; it reads HKYHNRALLL…PKLAREIGGE (224 aa). Residues Cys120, Cys124, and Cys127 each contribute to the [4Fe-4S] cluster site. Lys332 is subject to N6-(pyridoxal phosphate)lysine.

The protein belongs to the radical SAM superfamily. KamA family. It depends on [4Fe-4S] cluster as a cofactor. Pyridoxal 5'-phosphate is required as a cofactor.

It carries out the reaction L-lysine = D-beta-lysine. In terms of biological role, with EpmA is involved in the beta-lysylation step of the post-translational modification of translation elongation factor P (EF-P) on 'Lys-34'. EpmB appears to act before EpmA. Displays lysine 2,3-aminomutase activity, producing (R)-beta-lysine from (S)-alpha-lysine (L-lysine). Cannot use (S)-ornithine or (R)-alpha-lysine as a substrate. The sequence is that of L-lysine 2,3-aminomutase (epmB) from Escherichia coli (strain K12).